A 213-amino-acid polypeptide reads, in one-letter code: Thymidylate kinase (213 aa).

Residue 10–17 (GLEGAGKT) coordinates ATP.

It belongs to the thymidylate kinase family.

It carries out the reaction dTMP + ATP = dTDP + ADP. Functionally, phosphorylation of dTMP to form dTDP in both de novo and salvage pathways of dTTP synthesis. The protein is Thymidylate kinase of Escherichia fergusonii (strain ATCC 35469 / DSM 13698 / CCUG 18766 / IAM 14443 / JCM 21226 / LMG 7866 / NBRC 102419 / NCTC 12128 / CDC 0568-73).